Consider the following 121-residue polypeptide: Small ribosomal subunit protein uS13 (121 aa).

The disordered stretch occupies residues 91-121 (HRRGLPVRGQNSKNNARTRKGPRRTVANKKK). The span at 106–121 (ARTRKGPRRTVANKKK) shows a compositional bias: basic residues.

The protein belongs to the universal ribosomal protein uS13 family. In terms of assembly, part of the 30S ribosomal subunit. Forms a loose heterodimer with protein S19. Forms two bridges to the 50S subunit in the 70S ribosome.

Its function is as follows. Located at the top of the head of the 30S subunit, it contacts several helices of the 16S rRNA. In the 70S ribosome it contacts the 23S rRNA (bridge B1a) and protein L5 of the 50S subunit (bridge B1b), connecting the 2 subunits; these bridges are implicated in subunit movement. Contacts the tRNAs in the A and P-sites. The chain is Small ribosomal subunit protein uS13 from Bacillus mycoides (strain KBAB4) (Bacillus weihenstephanensis).